A 155-amino-acid chain; its full sequence is 6,7-dimethyl-8-ribityllumazine synthase (155 aa).

5-amino-6-(D-ribitylamino)uracil is bound by residues Trp22, 56–58 (SFE), and 80–82 (AVI). Residue 85–86 (AT) participates in (2S)-2-hydroxy-3-oxobutyl phosphate binding. Residue His88 is the Proton donor of the active site. Phe113 is a 5-amino-6-(D-ribitylamino)uracil binding site. Arg127 lines the (2S)-2-hydroxy-3-oxobutyl phosphate pocket.

The protein belongs to the DMRL synthase family.

The catalysed reaction is (2S)-2-hydroxy-3-oxobutyl phosphate + 5-amino-6-(D-ribitylamino)uracil = 6,7-dimethyl-8-(1-D-ribityl)lumazine + phosphate + 2 H2O + H(+). Its pathway is cofactor biosynthesis; riboflavin biosynthesis; riboflavin from 2-hydroxy-3-oxobutyl phosphate and 5-amino-6-(D-ribitylamino)uracil: step 1/2. In terms of biological role, catalyzes the formation of 6,7-dimethyl-8-ribityllumazine by condensation of 5-amino-6-(D-ribitylamino)uracil with 3,4-dihydroxy-2-butanone 4-phosphate. This is the penultimate step in the biosynthesis of riboflavin. The polypeptide is 6,7-dimethyl-8-ribityllumazine synthase (Chloroflexus aurantiacus (strain ATCC 29364 / DSM 637 / Y-400-fl)).